Consider the following 426-residue polypeptide: F-box protein At2g15640 (426 aa).

Residues 1–48 (MNPSTITNDLTVEILSRLPAKSVARFHCVSKQWGSIFGSPYFKELFLT) enclose the F-box domain.

This is F-box protein At2g15640 from Arabidopsis thaliana (Mouse-ear cress).